The primary structure comprises 369 residues: Cytokine receptor common subunit gamma (369 aa).

The first 22 residues, 1–22, serve as a signal peptide directing secretion; it reads MLKPSLPFTSLLFLQLPLLGVG. At 23-262 the chain is on the extracellular side; that stretch reads LNTTILTPNG…ENPFLFALEA (240 aa). Asparagine 24, asparagine 71, asparagine 75, and asparagine 84 each carry an N-linked (GlcNAc...) asparagine glycan. Cysteines 62 and 72 form a disulfide. Cysteine 102 and cysteine 115 are joined by a disulfide. Residues 156–253 enclose the Fibronectin type-III domain; that stretch reads APENLTLHKL…IHWGSNTSKE (98 aa). The N-linked (GlcNAc...) asparagine glycan is linked to asparagine 159. Cysteine 182 and cysteine 231 are oxidised to a cystine. Residues 237 to 241 carry the WSXWS motif motif; the sequence is WSEWS. Asparagine 249 carries an N-linked (GlcNAc...) asparagine glycan. Residues 263–283 traverse the membrane as a helical segment; sequence VVISVGSMGLIISLLCVYFWL. Topologically, residues 284–369 are cytoplasmic; the sequence is ERTMPRIPTL…PPCYTLKPET (86 aa). Residues 286–294 carry the Box 1 motif motif; it reads TMPRIPTLK. Threonine 292 carries the phosphothreonine modification.

It belongs to the type I cytokine receptor family. Type 5 subfamily. As to quaternary structure, the gamma subunit is common to the IL2, IL4, IL7, IL15, IL21 and probably also the IL13 receptors. Interacts with SHB upon interleukin stimulation. Interacts with IL9. (Microbial infection) Interacts with HTLV-1 accessory protein p12I.

It is found in the cell membrane. Its subcellular location is the cell surface. Its function is as follows. Common subunit for the receptors for a variety of interleukins. Probably in association with IL15RA, involved in the stimulation of neutrophil phagocytosis by IL15. The chain is Cytokine receptor common subunit gamma (IL2RG) from Homo sapiens (Human).